The primary structure comprises 81 residues: NAD(P)H-quinone oxidoreductase subunit O (81 aa).

Belongs to the complex I NdhO subunit family. NDH-1 can be composed of about 15 different subunits; different subcomplexes with different compositions have been identified which probably have different functions.

It is found in the cellular thylakoid membrane. The catalysed reaction is a plastoquinone + NADH + (n+1) H(+)(in) = a plastoquinol + NAD(+) + n H(+)(out). It catalyses the reaction a plastoquinone + NADPH + (n+1) H(+)(in) = a plastoquinol + NADP(+) + n H(+)(out). NDH-1 shuttles electrons from an unknown electron donor, via FMN and iron-sulfur (Fe-S) centers, to quinones in the respiratory and/or the photosynthetic chain. The immediate electron acceptor for the enzyme in this species is believed to be plastoquinone. Couples the redox reaction to proton translocation, and thus conserves the redox energy in a proton gradient. Cyanobacterial NDH-1 also plays a role in inorganic carbon-concentration. The sequence is that of NAD(P)H-quinone oxidoreductase subunit O from Prochlorococcus marinus (strain MIT 9303).